A 276-amino-acid polypeptide reads, in one-letter code: 3beta-hydroxysteroid dehydrogenase (276 aa).

Residues 70 to 71 (DV), asparagine 97, tyrosine 162, and lysine 166 each bind NADP(+). The active-site Proton acceptor is tyrosine 162.

This sequence belongs to the short-chain dehydrogenases/reductases (SDR) family.

It carries out the reaction 3-oxo-5beta-cholan-24-oate + NADPH + H(+) = isolithocholate + NADP(+). It catalyses the reaction 12alpha-hydroxy-3-oxo-5beta-cholan-24-oate + NADPH + H(+) = isodeoxycholate + NADP(+). The catalysed reaction is 12alpha-hydroxy-3-oxo-5beta-cholan-24-oate + NADH + H(+) = isodeoxycholate + NAD(+). The enzyme catalyses 7alpha,12alpha-dihydroxy-3-oxo-5beta-cholan-24-oate + NADPH + H(+) = isocholate + NADP(+). It carries out the reaction 3-oxochenodeoxycholate + NADPH + H(+) = isochenodeoxycholate + NADP(+). Functionally, involved in the modification of secondary bile acids into iso-bile acids (3beta-bile acids) via epimerization of the 3-OH group through a 3-oxo-intermediate. Catalyzes the reduction of 12-alpha-hydroxy-3-oxo-5-beta-cholan-24-oate (3-oxo-DCA) and 3-oxo-5-beta-cholan-24-oate (3-oxo-LCA) to yield isodeoxycholate (isoDCA) and isolithocholate (isoLCA), respectively. Is also able to catalyze the reduction of 3-dehydrocholate (3-oxo-CA or 7alpha,12alpha-dihydroxy-3-oxo-5beta-cholan-24-oate) and 7-alpha-hydroxy-3-oxo-5-beta-cholan-24-oate (3-oxo-CDCA), into isocholate (isoCA) and isochenodeoxycholate (isoCDCA), respectively. Accepts both NADPH and NADH as cosubstrates. The conversion of the abundant bile acid deoxycholate (DCA) into isoDCA by the gut bacterium R.gnavus favors the growth of the keystone commensal genus Bacteroides, since isoDCA is less cytotoxic than its parent compound, DCA; iso-bile acids have thus a potential role in modulating gut community composition. This chain is 3beta-hydroxysteroid dehydrogenase, found in Mediterraneibacter gnavus (strain ATCC 29149 / DSM 114966 / JCM 6515 / VPI C7-9) (Ruminococcus gnavus).